We begin with the raw amino-acid sequence, 151 residues long: Peptide deformylase (151 aa).

Fe cation-binding residues include Cys-88 and His-130. Glu-131 is a catalytic residue. A Fe cation-binding site is contributed by His-134.

Belongs to the polypeptide deformylase family. The cofactor is Fe(2+).

The enzyme catalyses N-terminal N-formyl-L-methionyl-[peptide] + H2O = N-terminal L-methionyl-[peptide] + formate. Functionally, removes the formyl group from the N-terminal Met of newly synthesized proteins. Requires at least a dipeptide for an efficient rate of reaction. N-terminal L-methionine is a prerequisite for activity but the enzyme has broad specificity at other positions. The protein is Peptide deformylase of Heliobacterium modesticaldum (strain ATCC 51547 / Ice1).